The following is a 428-amino-acid chain: Enolase (428 aa).

Gln163 contributes to the (2R)-2-phosphoglycerate binding site. Glu205 (proton donor) is an active-site residue. Positions 242, 285, and 312 each coordinate Mg(2+). The (2R)-2-phosphoglycerate site is built by Lys337, Arg366, Ser367, and Lys388. Lys337 acts as the Proton acceptor in catalysis.

This sequence belongs to the enolase family. Mg(2+) is required as a cofactor.

It localises to the cytoplasm. Its subcellular location is the secreted. It is found in the cell surface. The enzyme catalyses (2R)-2-phosphoglycerate = phosphoenolpyruvate + H2O. It participates in carbohydrate degradation; glycolysis; pyruvate from D-glyceraldehyde 3-phosphate: step 4/5. Functionally, catalyzes the reversible conversion of 2-phosphoglycerate (2-PG) into phosphoenolpyruvate (PEP). It is essential for the degradation of carbohydrates via glycolysis. The protein is Enolase of Neisseria meningitidis serogroup C (strain 053442).